The sequence spans 475 residues: ISWI one complex protein 4 (475 aa).

A Phosphoserine modification is found at Ser2. Thr9 is subject to Phosphothreonine. 3 disordered regions span residues Val42–Glu84, Glu181–His296, and Glu454–Ala475. Phosphoserine occurs at positions 65 and 73. 3 stretches are compositionally biased toward acidic residues: residues Gln72–Glu84, Glu181–Glu193, and Ala241–Lys252. A Phosphoserine modification is found at Ser242. The span at Lys259–Lys294 shows a compositional bias: basic residues. A compositionally biased stretch (basic and acidic residues) spans Asp456–Ala475.

Component of the ISW1B complex, which at least consists of ISW1, IOC2 and IOC4.

Its subcellular location is the nucleus. Functionally, functions as a component of the ISW1B complex, which acts in remodeling the chromatin by catalyzing an ATP-dependent alteration in the structure of nucleosomal DNA. The ISW1B complex acts within coding regions to control the amount of RNA polymerase II released into productive elongation and to coordinate elongation with termination and pre-mRNA processing. The sequence is that of ISWI one complex protein 4 (IOC4) from Saccharomyces cerevisiae (strain ATCC 204508 / S288c) (Baker's yeast).